A 345-amino-acid polypeptide reads, in one-letter code: Glycerol-3-phosphate dehydrogenase [NAD(P)+] (345 aa).

Residues serine 11, tryptophan 12, histidine 32, arginine 33, and lysine 106 each contribute to the NADPH site. Residues lysine 106, glycine 137, and serine 139 each contribute to the sn-glycerol 3-phosphate site. Alanine 141 is a binding site for NADPH. Positions 192, 245, 255, 256, and 257 each coordinate sn-glycerol 3-phosphate. Lysine 192 acts as the Proton acceptor in catalysis. Arginine 256 contacts NADPH. NADPH-binding residues include valine 280 and glutamate 282.

It belongs to the NAD-dependent glycerol-3-phosphate dehydrogenase family.

It localises to the cytoplasm. It catalyses the reaction sn-glycerol 3-phosphate + NAD(+) = dihydroxyacetone phosphate + NADH + H(+). It carries out the reaction sn-glycerol 3-phosphate + NADP(+) = dihydroxyacetone phosphate + NADPH + H(+). The protein operates within membrane lipid metabolism; glycerophospholipid metabolism. Its activity is regulated as follows. Does not seem to be inhibited by sn-glycerol 3-phosphate, in contrast to the E.coli homolog enzyme which is very sensitive to allosteric inhibition by G3P. In terms of biological role, catalyzes the reduction of the glycolytic intermediate dihydroxyacetone phosphate (DHAP) to sn-glycerol 3-phosphate (G3P), the key precursor for phospholipid synthesis. This is Glycerol-3-phosphate dehydrogenase [NAD(P)+] from Bacillus subtilis (strain 168).